A 249-amino-acid chain; its full sequence is Large ribosomal subunit protein uL1 (249 aa).

Belongs to the universal ribosomal protein uL1 family. In terms of assembly, part of the 50S ribosomal subunit.

In terms of biological role, binds directly to 23S rRNA. The L1 stalk is quite mobile in the ribosome, and is involved in E site tRNA release. Its function is as follows. Protein L1 is also a translational repressor protein, it controls the translation of the L11 operon by binding to its mRNA. In Orientia tsutsugamushi (strain Ikeda) (Rickettsia tsutsugamushi), this protein is Large ribosomal subunit protein uL1.